A 580-amino-acid polypeptide reads, in one-letter code: Isochorismate synthase, chloroplastic (580 aa).

The N-terminal 91 residues, 1–91, are a transit peptide targeting the chloroplast; the sequence is MASITGHCVA…LAMERLSSAV (91 aa).

This sequence belongs to the isochorismate synthase family. Mg(2+) serves as cofactor.

Its subcellular location is the plastid. The protein resides in the chloroplast. The catalysed reaction is chorismate = isochorismate. Not inhibited by Tyr, Phe or Trp. Functionally, involved in the synthesis of o-succinylbenzoic acid, 2,3-dihydroxybenzoic acid and salicylic acid (SA). The protein is Isochorismate synthase, chloroplastic of Catharanthus roseus (Madagascar periwinkle).